Reading from the N-terminus, the 151-residue chain is Ribosome maturation factor RimP (151 aa).

This sequence belongs to the RimP family.

It localises to the cytoplasm. Its function is as follows. Required for maturation of 30S ribosomal subunits. This Endomicrobium trichonymphae protein is Ribosome maturation factor RimP.